A 253-amino-acid polypeptide reads, in one-letter code: Ciliary microtubule associated protein 1B (253 aa).

Residues 182 to 207 (PGPCAYQVVSPGVYKSRAPQFTILAR) form an STPGR repeat.

The protein belongs to the CIMAP family.

The protein localises to the cell projection. The protein resides in the cilium. It is found in the flagellum. In Homo sapiens (Human), this protein is Ciliary microtubule associated protein 1B.